Reading from the N-terminus, the 193-residue chain is Mediator of RNA polymerase II transcription subunit 30 (193 aa).

The segment at 1-20 (MSTPPLAASGMAPGPFAGPQ) is disordered. Ser-2 is modified (N-acetylserine). Positions 10–20 (GMAPGPFAGPQ) are enriched in low complexity. The stretch at 71–93 (YQDRLAKLQDHLRQLSILFRKLR) forms a coiled coil.

The protein belongs to the Mediator complex subunit 30 family. Component of the Mediator complex, which is composed of MED1, MED4, MED6, MED7, MED8, MED9, MED10, MED11, MED12, MED13, MED13L, MED14, MED15, MED16, MED17, MED18, MED19, MED20, MED21, MED22, MED23, MED24, MED25, MED26, MED27, MED29, MED30, MED31, CCNC, CDK8 and CDC2L6/CDK11. The MED12, MED13, CCNC and CDK8 subunits form a distinct module termed the CDK8 module. Mediator containing the CDK8 module is less active than Mediator lacking this module in supporting transcriptional activation. Individual preparations of the Mediator complex lacking one or more distinct subunits have been variously termed ARC, CRSP, DRIP, PC2, SMCC and TRAP.

It localises to the nucleus. In terms of biological role, component of the Mediator complex, a coactivator involved in the regulated transcription of nearly all RNA polymerase II-dependent genes. Mediator functions as a bridge to convey information from gene-specific regulatory proteins to the basal RNA polymerase II transcription machinery. Mediator is recruited to promoters by direct interactions with regulatory proteins and serves as a scaffold for the assembly of a functional preinitiation complex with RNA polymerase II and the general transcription factors. This chain is Mediator of RNA polymerase II transcription subunit 30 (MED30), found in Bos taurus (Bovine).